We begin with the raw amino-acid sequence, 435 residues long: Arginine/serine-rich coiled-coil protein 2 (435 aa).

The segment covering 1-27 (MAASDTERDGLAPEKTSPDRDKKKEQS) has biased composition (basic and acidic residues). The tract at residues 1–230 (MAASDTERDG…PSPPPFRGRN (230 aa)) is disordered. Ala2 is modified (N-acetylalanine). Ser4 carries the post-translational modification Phosphoserine. A phosphothreonine mark is found at Thr6 and Thr16. Phosphoserine is present on residues Ser17, Ser30, and Ser32. The span at 35-51 (ASKHHYSRSRSRSRERK) shows a compositional bias: basic residues. Positions 66-111 (RSKEARRHESKDKSSKKHKSEEHNDKEHSSDKGRERLNSSENGEDR) are enriched in basic and acidic residues. At Ser104 the chain carries Phosphoserine. Positions 112-214 (HKRKERKSSR…KRIEKPRRFS (103 aa)) are enriched in basic residues. The stretch at 230–270 (NTAMDAQEALARRLERAKKLQEQREKEMVEKQKQQEIAAAA) forms a coiled coil. Lys376 participates in a covalent cross-link: Glycyl lysine isopeptide (Lys-Gly) (interchain with G-Cter in SUMO1); alternate. A Glycyl lysine isopeptide (Lys-Gly) (interchain with G-Cter in SUMO2); alternate cross-link involves residue Lys376. Ser377 carries the post-translational modification Phosphoserine.

Belongs to the RSRC2 family.

The sequence is that of Arginine/serine-rich coiled-coil protein 2 (RSRC2) from Pongo abelii (Sumatran orangutan).